A 124-amino-acid chain; its full sequence is Large ribosomal subunit protein bL12 (124 aa).

It belongs to the bacterial ribosomal protein bL12 family. Homodimer. Part of the ribosomal stalk of the 50S ribosomal subunit. Forms a multimeric L10(L12)X complex, where L10 forms an elongated spine to which 2 to 4 L12 dimers bind in a sequential fashion. Binds GTP-bound translation factors.

Its function is as follows. Forms part of the ribosomal stalk which helps the ribosome interact with GTP-bound translation factors. Is thus essential for accurate translation. This chain is Large ribosomal subunit protein bL12, found in Rickettsia akari (strain Hartford).